Consider the following 69-residue polypeptide: Putative defensin-like protein 312 (69 aa).

Positions 1 to 19 (MSCFSFLVYFLLFIVTKMS) are cleaved as a signal peptide. Cysteines 45 and 57 form a disulfide.

It belongs to the DEFL family.

The protein resides in the secreted. The sequence is that of Putative defensin-like protein 312 from Arabidopsis thaliana (Mouse-ear cress).